The following is a 359-amino-acid chain: Proton-gated ion channel (359 aa).

The first 43 residues, 1-43 (MFPTGWRPKLSESIAASRMLWQPMAAVAVVQIGLLWFSPPVWG), serve as a signal peptide directing secretion. Residues 44 to 235 (QDMVSPPPPI…LDYQLRISRQ (192 aa)) are Periplasmic-facing. Residues 236 to 258 (YFSYIPNIILPMLFILFISWTAF) form a helical membrane-spanning segment. Residues 259-261 (WST) lie on the Cytoplasmic side of the membrane. Residues 262 to 286 (SYEANVTLVVSTLIAHIAFNILVET) traverse the membrane as a helical segment. Over 287-294 (NLPKTPYM) the chain is Periplasmic. Residues 295–323 (TYTGAIIFMIYLFYFVAVIEVTVQHYLKV) traverse the membrane as a helical segment. The Cytoplasmic segment spans residues 324–326 (ESQ). A helical membrane pass occupies residues 327–359 (PARAASITRASRIAFPVVFLLANIILAFLFFGF).

The protein belongs to the ligand-gated ion channel (TC 1.A.9) family. As to quaternary structure, homopentamer.

The protein localises to the cell inner membrane. Its activity is regulated as follows. Tetraethylammonium (TEA) and tetrabutylammonium (TBA) inhibit the proton-activated currents in a dose- and voltage-dependent manner in vitro, whereas the blocker of acid sensing ion channels, amiloride, has no effect. Channel current of GLIC can be inhibited by inhaled and intravenous general anesthetics at and below concentrations used clinically. Ion conduction is also inhibited by lidocaine and by divalent transition metal ions such as cadmium ions. In terms of biological role, cationic channel with similar permeabilities for Na(+) and K(+), that is activated by an increase of the proton concentration on the extracellular side. Displays no permeability for chloride ions. Shows slow kinetics of activation, no desensitization and a single channel conductance of 8 pS. Might contribute to adaptation to external pH change. The sequence is that of Proton-gated ion channel (glvI) from Gloeobacter violaceus (strain ATCC 29082 / PCC 7421).